Here is a 240-residue protein sequence, read N- to C-terminus: ATP synthase subunit a 1 (240 aa).

5 helical membrane passes run G23–A43, V82–F102, D120–F140, L186–L206, and G207–H227.

This sequence belongs to the ATPase A chain family. F-type ATPases have 2 components, CF(1) - the catalytic core - and CF(0) - the membrane proton channel. CF(1) has five subunits: alpha(3), beta(3), gamma(1), delta(1), epsilon(1). CF(0) has four main subunits: a, b, b' and c.

It is found in the cellular thylakoid membrane. Key component of the proton channel; it plays a direct role in the translocation of protons across the membrane. The sequence is that of ATP synthase subunit a 1 from Acaryochloris marina (strain MBIC 11017).